A 105-amino-acid chain; its full sequence is Small ribosomal subunit protein bS18 (105 aa).

Polar residues predominate over residues 1–10 (MAEETNQQAP). Residues 1–34 (MAEETNQQAPESGASSSQPTSRPSGPRGGSGGRK) form a disordered region. The segment covering 12-25 (SGASSSQPTSRPSG) has biased composition (low complexity).

This sequence belongs to the bacterial ribosomal protein bS18 family. Part of the 30S ribosomal subunit. Forms a tight heterodimer with protein bS6.

Its function is as follows. Binds as a heterodimer with protein bS6 to the central domain of the 16S rRNA, where it helps stabilize the platform of the 30S subunit. The polypeptide is Small ribosomal subunit protein bS18 (Acidobacterium capsulatum (strain ATCC 51196 / DSM 11244 / BCRC 80197 / JCM 7670 / NBRC 15755 / NCIMB 13165 / 161)).